Consider the following 160-residue polypeptide: Putative 4-hydroxy-4-methyl-2-oxoglutarate aldolase (160 aa).

Substrate is bound by residues 78-81 and Arg-100; that span reads GDVI. Asp-101 is a binding site for a divalent metal cation.

It belongs to the class II aldolase/RraA-like family. In terms of assembly, homotrimer. It depends on a divalent metal cation as a cofactor.

It carries out the reaction 4-hydroxy-4-methyl-2-oxoglutarate = 2 pyruvate. It catalyses the reaction oxaloacetate + H(+) = pyruvate + CO2. Catalyzes the aldol cleavage of 4-hydroxy-4-methyl-2-oxoglutarate (HMG) into 2 molecules of pyruvate. Also contains a secondary oxaloacetate (OAA) decarboxylase activity due to the common pyruvate enolate transition state formed following C-C bond cleavage in the retro-aldol and decarboxylation reactions. The protein is Putative 4-hydroxy-4-methyl-2-oxoglutarate aldolase of Mycolicibacterium paratuberculosis (strain ATCC BAA-968 / K-10) (Mycobacterium paratuberculosis).